The sequence spans 237 residues: Placenta-expressed transcript 1 protein (237 aa).

The signal sequence occupies residues 1–27; it reads MLSLRSLLPHLGLFLCLALHLSPSLSA. N-linked (GlcNAc...) asparagine glycosylation is found at N30, N67, N103, and N136. Polar residues predominate over residues 145-162; sequence KMEQVQPSASTPIPESSE. The tract at residues 145-170 is disordered; the sequence is KMEQVQPSASTPIPESSETSQTINTT. S218 carries GPI-anchor amidated serine lipidation. Positions 219–237 are cleaved as a propeptide — removed in mature form; that stretch reads PLAGALHILLVFLISKLLF.

In terms of processing, N-glycosylated. GPI-anchored. In terms of tissue distribution, present in hair follicle cells and sebaceous gland of skin, ciliated epithelial cells of trachea and bronchial tube, striated portion of submandibular gland, distal convoluted tubule cells of kidney, ciliated epithelial cells of oviduct, medulla of adrenal gland and anterior lobe of pituitary gland. Expressed in keratinocytes of the hair follicle at the trichilemmal zone corresponding to the terminally differentiated outermost suprabasal outer root sheath (ORS), including that of the sebaceous gland duct (SGD) and the directly adjacent upper distal end of the companion layer (CL). Expression is similar in all hair follicle growth stages. Also detected during both the early and late anagen phases above the bulge of stem cells. Expressed at the leading edge of the epidermal wound. Not expressed in the interfollicular epidermis (IFE), inner root sheath (IRS) and hair fiber. Highly expressed in placenta. Detected in mammary and prostate epithelia and in the pancreas (at protein level).

The protein localises to the apical cell membrane. Functionally, modulates leading keratinocyte migration and cellular adhesion to matrix proteins during a wound-healing response and promotes wound repair. May play a role during trichilemmal differentiation of the hair follicle. The chain is Placenta-expressed transcript 1 protein (Plet1) from Mus musculus (Mouse).